The chain runs to 331 residues: Phosphate acyltransferase (331 aa).

The protein belongs to the PlsX family. In terms of assembly, homodimer. Probably interacts with PlsY.

Its subcellular location is the cytoplasm. The catalysed reaction is a fatty acyl-[ACP] + phosphate = an acyl phosphate + holo-[ACP]. Its pathway is lipid metabolism; phospholipid metabolism. In terms of biological role, catalyzes the reversible formation of acyl-phosphate (acyl-PO(4)) from acyl-[acyl-carrier-protein] (acyl-ACP). This enzyme utilizes acyl-ACP as fatty acyl donor, but not acyl-CoA. The protein is Phosphate acyltransferase of Clostridium acetobutylicum (strain ATCC 824 / DSM 792 / JCM 1419 / IAM 19013 / LMG 5710 / NBRC 13948 / NRRL B-527 / VKM B-1787 / 2291 / W).